Consider the following 297-residue polypeptide: uncharacterized protein (297 aa).

The disordered stretch occupies residues 175-199 (VLPTNRNNPVRSNVDIKPVNPPSSK). A compositionally biased stretch (polar residues) spans 176 to 185 (LPTNRNNPVR). N-linked (GlcNAc...) asparagine; by host glycosylation occurs at Asn269. A helical transmembrane segment spans residues 277 to 297 (LFGSPVLLICVASLLLLIIIL).

The protein belongs to the ascovirus HvAV ORF18 family.

The protein localises to the membrane. This is an uncharacterized protein from Noctuidae (owlet moths).